The sequence spans 85 residues: DNA-directed RNA polymerase subunit Rpo11 (85 aa).

The protein belongs to the archaeal Rpo11/eukaryotic RPB11/RPC19 RNA polymerase subunit family. In terms of assembly, part of the RNA polymerase complex.

Its subcellular location is the cytoplasm. It catalyses the reaction RNA(n) + a ribonucleoside 5'-triphosphate = RNA(n+1) + diphosphate. DNA-dependent RNA polymerase (RNAP) catalyzes the transcription of DNA into RNA using the four ribonucleoside triphosphates as substrates. This is DNA-directed RNA polymerase subunit Rpo11 from Methanothermobacter thermautotrophicus (strain ATCC 29096 / DSM 1053 / JCM 10044 / NBRC 100330 / Delta H) (Methanobacterium thermoautotrophicum).